The following is a 219-amino-acid chain: Pyridoxine/pyridoxamine 5'-phosphate oxidase (219 aa).

The disordered stretch occupies residues 1–23 (MTSSVIPPSPSAADYAAEGDRPL). FMN-binding positions include 66-71 (RIVLLK), 81-82 (FT), Lys88, and Gln110. Lys71 lines the substrate pocket. Substrate contacts are provided by Tyr128, Arg132, and Ser136. FMN contacts are provided by residues 145–146 (QS) and Trp191. 197-199 (RMH) contributes to the substrate binding site. FMN is bound at residue Arg201.

The protein belongs to the pyridoxamine 5'-phosphate oxidase family. Homodimer. The cofactor is FMN.

It carries out the reaction pyridoxamine 5'-phosphate + O2 + H2O = pyridoxal 5'-phosphate + H2O2 + NH4(+). The catalysed reaction is pyridoxine 5'-phosphate + O2 = pyridoxal 5'-phosphate + H2O2. It participates in cofactor metabolism; pyridoxal 5'-phosphate salvage; pyridoxal 5'-phosphate from pyridoxamine 5'-phosphate: step 1/1. Its pathway is cofactor metabolism; pyridoxal 5'-phosphate salvage; pyridoxal 5'-phosphate from pyridoxine 5'-phosphate: step 1/1. Its function is as follows. Catalyzes the oxidation of either pyridoxine 5'-phosphate (PNP) or pyridoxamine 5'-phosphate (PMP) into pyridoxal 5'-phosphate (PLP). The chain is Pyridoxine/pyridoxamine 5'-phosphate oxidase from Hyphomonas neptunium (strain ATCC 15444).